We begin with the raw amino-acid sequence, 262 residues long: Undecaprenyl-diphosphatase (262 aa).

8 helical membrane-spanning segments follow: residues 15–35 (LTEW…IILL), 38–58 (SSAA…IVAF), 91–111 (LYIL…AKYV), 114–134 (IFGS…LLYS), 149–169 (ALIV…RSGA), 189–209 (FLLS…VSPA), 219–239 (VGLL…LSII), and 242–262 (GRLH…LSLL).

Belongs to the UppP family.

Its subcellular location is the cell membrane. The catalysed reaction is di-trans,octa-cis-undecaprenyl diphosphate + H2O = di-trans,octa-cis-undecaprenyl phosphate + phosphate + H(+). Catalyzes the dephosphorylation of undecaprenyl diphosphate (UPP). The polypeptide is Undecaprenyl-diphosphatase (Korarchaeum cryptofilum (strain OPF8)).